The following is a 473-amino-acid chain: ATP synthase subunit beta 2 (473 aa).

158 to 165 is a binding site for ATP; it reads GGAGVGKT.

This sequence belongs to the ATPase alpha/beta chains family. F-type ATPases have 2 components, CF(1) - the catalytic core - and CF(0) - the membrane proton channel. CF(1) has five subunits: alpha(3), beta(3), gamma(1), delta(1), epsilon(1). CF(0) has three main subunits: a(1), b(2) and c(9-12). The alpha and beta chains form an alternating ring which encloses part of the gamma chain. CF(1) is attached to CF(0) by a central stalk formed by the gamma and epsilon chains, while a peripheral stalk is formed by the delta and b chains.

Its subcellular location is the cell membrane. The enzyme catalyses ATP + H2O + 4 H(+)(in) = ADP + phosphate + 5 H(+)(out). Its function is as follows. Produces ATP from ADP in the presence of a proton gradient across the membrane. The catalytic sites are hosted primarily by the beta subunits. This chain is ATP synthase subunit beta 2, found in Listeria monocytogenes serotype 4b (strain F2365).